We begin with the raw amino-acid sequence, 232 residues long: Small ribosomal subunit protein uS3 (232 aa).

Positions 39–107 constitute a KH type-2 domain; sequence IREILHKELK…DVVINIVEIR (69 aa).

Belongs to the universal ribosomal protein uS3 family. Part of the 30S ribosomal subunit. Forms a tight complex with proteins S10 and S14.

In terms of biological role, binds the lower part of the 30S subunit head. Binds mRNA in the 70S ribosome, positioning it for translation. This Rhodopseudomonas palustris (strain BisB18) protein is Small ribosomal subunit protein uS3.